We begin with the raw amino-acid sequence, 511 residues long: MKFFLLLSLIGFCWAQYDPHTQYGRTAIVHLFEWRWVDIAKECERYLAPNGFAGVQVSPPNENIVVHSPSRPWWERYQPISYKICSRSGNEDEFRDMVNRCNNVGVRIYVDAVINHMCGVGAQAGQSSTCGSYFNPNNRDFPGVPYSGFDFNDGKCRTASGGIENYQDAAQVRDCRLSGLLDLALEKDYVRTKVADYMNHLIDIGVAGFRLDASKHMWPGDIKAILDKLHNLNTKWFSQGSRPFIFQEVIDLGGEAVSSNEYFGNGRVTEFKYGAKLGKVMRKWDGEKMSYLKNWGEGWGLMPSDRALVFVDNHDNQRGHGAGGASILTFWDARLYKMAVGFMLAHPYGFTRVMSSYYWPRNFQNGKDVNDWVGPPNNNGKTKEVSINPDSTCGNDWICEHRWRQIRNMVAFRNVVNGQPFANWWDNDSNQVAFGRGNKGFIVFNNDDWALSETLQTGLPAGTYCDVISGDKVDGNCTGIKVYVGNDGKAHFSISNSAEDPFIAIHAESKI.

The first 15 residues, 1 to 15 (MKFFLLLSLIGFCWA), serve as a signal peptide directing secretion. Glutamine 16 carries the post-translational modification Pyrrolidone carboxylic acid. 3 disulfide bridges follow: cysteine 43–cysteine 101, cysteine 85–cysteine 130, and cysteine 156–cysteine 175. The Ca(2+) site is built by asparagine 115, arginine 173, and aspartate 182. A chloride-binding site is contributed by arginine 210. The active-site Nucleophile is the aspartate 212. Histidine 216 provides a ligand contact to Ca(2+). The active-site Proton donor is the glutamate 248. 2 residues coordinate chloride: asparagine 313 and arginine 352. 2 cysteine pairs are disulfide-bonded: cysteine 393–cysteine 399 and cysteine 465–cysteine 477.

Belongs to the glycosyl hydrolase 13 family. As to quaternary structure, monomer. Ca(2+) is required as a cofactor. The cofactor is chloride. Expressed in liver and saliva.

The protein resides in the secreted. It catalyses the reaction Endohydrolysis of (1-&gt;4)-alpha-D-glucosidic linkages in polysaccharides containing three or more (1-&gt;4)-alpha-linked D-glucose units.. In Mus musculus (Mouse), this protein is Alpha-amylase 1 (Amy1).